The following is a 220-amino-acid chain: ATP phosphoribosyltransferase (220 aa).

The protein belongs to the ATP phosphoribosyltransferase family. Short subfamily. Heteromultimer composed of HisG and HisZ subunits.

The protein localises to the cytoplasm. It catalyses the reaction 1-(5-phospho-beta-D-ribosyl)-ATP + diphosphate = 5-phospho-alpha-D-ribose 1-diphosphate + ATP. Its pathway is amino-acid biosynthesis; L-histidine biosynthesis; L-histidine from 5-phospho-alpha-D-ribose 1-diphosphate: step 1/9. In terms of biological role, catalyzes the condensation of ATP and 5-phosphoribose 1-diphosphate to form N'-(5'-phosphoribosyl)-ATP (PR-ATP). Has a crucial role in the pathway because the rate of histidine biosynthesis seems to be controlled primarily by regulation of HisG enzymatic activity. In Prochlorococcus marinus (strain NATL1A), this protein is ATP phosphoribosyltransferase.